The primary structure comprises 40 residues: Dolichyl-diphosphooligosaccharide--protein glycosyltransferase subunit 4 (40 aa).

Over 1–7 (MITDMQL) the chain is Lumenal. The chain crosses the membrane as a helical span at residues 8-28 (AIFSNVLGVFLFLLVVAYHYI). The Cytoplasmic portion of the chain corresponds to 29–40 (NANTGKPSAKAK).

It belongs to the OST4 family. As to quaternary structure, component of the oligosaccharyltransferase (OST) complex.

It is found in the endoplasmic reticulum membrane. Subunit of the oligosaccharyl transferase (OST) complex that catalyzes the initial transfer of a defined glycan (Glc(3)Man(9)GlcNAc(2) in eukaryotes) from the lipid carrier dolichol-pyrophosphate to an asparagine residue within an Asn-X-Ser/Thr consensus motif in nascent polypeptide chains, the first step in protein N-glycosylation. N-glycosylation occurs cotranslationally and the complex associates with the Sec61 complex at the channel-forming translocon complex that mediates protein translocation across the endoplasmic reticulum (ER). All subunits are required for a maximal enzyme activity. This is Dolichyl-diphosphooligosaccharide--protein glycosyltransferase subunit 4 from Drosophila sechellia (Fruit fly).